A 513-amino-acid chain; its full sequence is Probable helicase MJ1565 (513 aa).

ATP-binding positions include arginine 151, 160–165 (GMGKSN), and 467–468 (KV).

It belongs to the HerA family.

It catalyses the reaction Couples ATP hydrolysis with the unwinding of duplex DNA at the replication fork by translocating in the 5'-3' direction. This creates two antiparallel DNA single strands (ssDNA). The leading ssDNA polymer is the template for DNA polymerase III holoenzyme which synthesizes a continuous strand.. The enzyme catalyses ATP + H2O = ADP + phosphate + H(+). It carries out the reaction Couples ATP hydrolysis with the unwinding of duplex DNA by translocating in the 3'-5' direction.. Functionally, a probably bidirectional DNA helicase. The protein is Probable helicase MJ1565 of Methanocaldococcus jannaschii (strain ATCC 43067 / DSM 2661 / JAL-1 / JCM 10045 / NBRC 100440) (Methanococcus jannaschii).